Consider the following 196-residue polypeptide: Charged multivesicular body protein 1a (196 aa).

Positions 5 to 41 form a coiled coil; it reads LFQLKFTAKQLEKLAKKAEKDSNTEQAKVKKALQQKN. Positions 170–181 are enriched in polar residues; it reads QGASSVGESSTR. The tract at residues 170-196 is disordered; that stretch reads QGASSVGESSTRTQEDQLSRRLASLRN. Residues 185 to 195 carry the MIT-interacting motif motif; that stretch reads DQLSRRLASLR.

It belongs to the SNF7 family. In terms of assembly, probable peripherally associated component of the endosomal sorting required for transport complex III (ESCRT-III).

It is found in the cytoplasm. The protein resides in the endosome membrane. Its function is as follows. Probable peripherally associated component of the endosomal sorting required for transport complex III (ESCRT-III) which is involved in multivesicular bodies (MVBs) formation and sorting of endosomal cargo proteins into MVBs. MVBs contain intraluminal vesicles (ILVs) that are generated by invagination and scission from the limiting membrane of the endosome and mostly are delivered to lysosomes enabling degradation of membrane proteins, such as stimulated growth factor receptors, lysosomal enzymes and lipids. This chain is Charged multivesicular body protein 1a (chmp1a), found in Xenopus laevis (African clawed frog).